Consider the following 102-residue polypeptide: Large ribosomal subunit protein bL21 (102 aa).

Belongs to the bacterial ribosomal protein bL21 family. As to quaternary structure, part of the 50S ribosomal subunit. Contacts protein L20.

Its function is as follows. This protein binds to 23S rRNA in the presence of protein L20. This chain is Large ribosomal subunit protein bL21, found in Citrifermentans bemidjiense (strain ATCC BAA-1014 / DSM 16622 / JCM 12645 / Bem) (Geobacter bemidjiensis).